Consider the following 460-residue polypeptide: Benzyl alcohol O-benzoyltransferase (460 aa).

Active-site proton acceptor residues include His167 and Asp382.

The protein belongs to the plant acyltransferase family.

The catalysed reaction is benzyl alcohol + benzoyl-CoA = benzyl benzoate + CoA. Probably involved in the formation of volatile ester benzylbenzoate. The polypeptide is Benzyl alcohol O-benzoyltransferase (HSR201) (Nicotiana tabacum (Common tobacco)).